A 249-amino-acid chain; its full sequence is Small ribosomal subunit protein eS6 (249 aa).

Residue lysine 14 forms a Glycyl lysine isopeptide (Lys-Gly) (interchain with G-Cter in SUMO2) linkage. Glutamate 35 carries the post-translational modification ADP-ribosyl glutamic acid. Arginine 137 is modified ((3R)-3-hydroxyarginine). Position 148 is a phosphoserine (serine 148). Lysine 211 is modified (N6-acetyllysine). The segment covering 217-229 (MKEAKEKRQEQIA) has biased composition (basic and acidic residues). Positions 217–249 (MKEAKEKRQEQIAKRRRLSSLRASTSKSESSQK) are disordered. Residues serine 235, serine 236, serine 240, serine 242, serine 244, and serine 247 each carry the phosphoserine modification. Over residues 236–249 (SLRASTSKSESSQK) the composition is skewed to low complexity.

This sequence belongs to the eukaryotic ribosomal protein eS6 family. As to quaternary structure, component of the small ribosomal subunit. Part of the small subunit (SSU) processome, composed of more than 70 proteins and the RNA chaperone small nucleolar RNA (snoRNA) U3. Post-translationally, ribosomal protein S6 is the major substrate of protein kinases in eukaryote ribosomes. The phosphorylation is stimulated by growth factors, tumor promoting agents, and mitogens. It is dephosphorylated at growth arrest. Phosphorylated at Ser-235 and Ser-236 by RPS6KA1 and RPS6KA3; phosphorylation at these sites facilitates the assembly of the pre-initiation complex. In terms of processing, specifically hydroxylated (with R stereochemistry) at C-3 of Arg-137 by KDM8. Mono-ADP-ribosylation at Glu-35 by PARP16 inhibits polysome assembly and mRNA loading, thereby inhibiting protein translation.

The protein resides in the cytoplasm. It localises to the nucleus. It is found in the nucleolus. Component of the 40S small ribosomal subunit. Plays an important role in controlling cell growth and proliferation through the selective translation of particular classes of mRNA. Part of the small subunit (SSU) processome, first precursor of the small eukaryotic ribosomal subunit. During the assembly of the SSU processome in the nucleolus, many ribosome biogenesis factors, an RNA chaperone and ribosomal proteins associate with the nascent pre-rRNA and work in concert to generate RNA folding, modifications, rearrangements and cleavage as well as targeted degradation of pre-ribosomal RNA by the RNA exosome. This is Small ribosomal subunit protein eS6 (RPS6) from Oryctolagus cuniculus (Rabbit).